Consider the following 272-residue polypeptide: Putative phosphoenolpyruvate synthase regulatory protein (272 aa).

Residue 152–159 (GVSRCGKT) participates in ADP binding.

Belongs to the pyruvate, phosphate/water dikinase regulatory protein family. PSRP subfamily.

The catalysed reaction is [pyruvate, water dikinase] + ADP = [pyruvate, water dikinase]-phosphate + AMP + H(+). It carries out the reaction [pyruvate, water dikinase]-phosphate + phosphate + H(+) = [pyruvate, water dikinase] + diphosphate. In terms of biological role, bifunctional serine/threonine kinase and phosphorylase involved in the regulation of the phosphoenolpyruvate synthase (PEPS) by catalyzing its phosphorylation/dephosphorylation. This Pseudomonas savastanoi pv. phaseolicola (strain 1448A / Race 6) (Pseudomonas syringae pv. phaseolicola (strain 1448A / Race 6)) protein is Putative phosphoenolpyruvate synthase regulatory protein.